Here is a 445-residue protein sequence, read N- to C-terminus: MMYQPELETLPREKLRALQEERLKRLVAYVYERVPFYRRLLDEAGVDPKGFRGLEDLPRIPFTKKTDLRDHYPFGLFAVPREEVARVHASSGTTGKPTVVGYTKNDLKVFAEVVARSLAAAGARPGMMLHNAYGYGLFTGGLGLHGGAEALGMTVVPVSGGMTERQVMLIQDFRPEVISCTPSYAQTLAEEFRKRGVSPEELSLEYAVLGAEPWTEAIRKQVDEGLGVKSTNIYGLSEIIGPGVSNECVEERQGSHIWEDHFLPEVVDPDTGEPLPEGKVGVLVFTTLTKEAMPLLRYWTGDLTFLTYEACTCGRTHVRMGPILGRTDDMLIIRGVNVYPTQVEAVLLAIPEVVPHYQIVVRREGTLDEAELKVEVSEPFFREIGQEVLSDEVVEADHRLHALRERIARKIKDNVGVTLKVTLLPPGQAPRSEGGKLRRVLDLRK.

Belongs to the phenylacetyl-CoA ligase family. In terms of assembly, monomer.

The catalysed reaction is 2-phenylacetate + ATP + CoA = phenylacetyl-CoA + AMP + diphosphate. It functions in the pathway aromatic compound metabolism; phenylacetate degradation. Its function is as follows. Catalyzes the activation of phenylacetic acid (PA) to phenylacetyl-CoA (PA-CoA). Involved in the phenylalanine metabolism. In Thermus thermophilus (strain ATCC BAA-163 / DSM 7039 / HB27), this protein is Phenylacetate-coenzyme A ligase.